A 38-amino-acid polypeptide reads, in one-letter code: Histidine decarboxylase small chain (38 aa).

In terms of assembly, heterohexamer of 3 large and 3 small chains. Requires pyruvate as cofactor.

It catalyses the reaction L-histidine + H(+) = histamine + CO2. This Micrococcus sp protein is Histidine decarboxylase small chain.